Here is a 197-residue protein sequence, read N- to C-terminus: A-kinase anchor protein 14 (197 aa).

Polar residues-rich tracts occupy residues 1 to 11 (MSETQNSTSQK) and 19 to 29 (AASQTMPNTQD). The disordered stretch occupies residues 1-29 (MSETQNSTSQKAMDEDNKAASQTMPNTQD). The tract at residues 35–52 (ELTQVALALVEDVINYAV) is RII-binding.

Binds to type II regulatory subunits (RII). Present in cilia (at protein level). Expressed in tissues containing axoneme-based organelles (cilia and/or flagella): trachea and testis. Highly expressed in airway cilia.

It localises to the cytoplasm. Binds to type II regulatory subunits of protein kinase A and anchors/targets them. This is A-kinase anchor protein 14 (AKAP14) from Homo sapiens (Human).